We begin with the raw amino-acid sequence, 272 residues long: Diaminopimelate epimerase (272 aa).

Substrate contacts are provided by asparagine 11 and asparagine 63. The Proton donor role is filled by cysteine 72. Residues 73 to 74 (GN), asparagine 190, and 208 to 209 (ER) contribute to the substrate site. Cysteine 217 serves as the catalytic Proton acceptor. Residue 218-219 (GT) coordinates substrate.

This sequence belongs to the diaminopimelate epimerase family. As to quaternary structure, homodimer.

The protein localises to the cytoplasm. It catalyses the reaction (2S,6S)-2,6-diaminopimelate = meso-2,6-diaminopimelate. It functions in the pathway amino-acid biosynthesis; L-lysine biosynthesis via DAP pathway; DL-2,6-diaminopimelate from LL-2,6-diaminopimelate: step 1/1. Functionally, catalyzes the stereoinversion of LL-2,6-diaminopimelate (L,L-DAP) to meso-diaminopimelate (meso-DAP), a precursor of L-lysine and an essential component of the bacterial peptidoglycan. In Clostridium perfringens (strain 13 / Type A), this protein is Diaminopimelate epimerase.